The chain runs to 289 residues: Acetylglutamate kinase (289 aa).

Substrate is bound by residues 60 to 61 (GG), R82, and N182.

Belongs to the acetylglutamate kinase family. ArgB subfamily.

The protein localises to the cytoplasm. It catalyses the reaction N-acetyl-L-glutamate + ATP = N-acetyl-L-glutamyl 5-phosphate + ADP. The protein operates within amino-acid biosynthesis; L-arginine biosynthesis; N(2)-acetyl-L-ornithine from L-glutamate: step 2/4. Catalyzes the ATP-dependent phosphorylation of N-acetyl-L-glutamate. The chain is Acetylglutamate kinase from Methanothrix thermoacetophila (strain DSM 6194 / JCM 14653 / NBRC 101360 / PT) (Methanosaeta thermophila).